The sequence spans 41 residues: Pi-stichotoxin-Hmg5c (41 aa).

Intrachain disulfides connect Cys4–Cys37, Cys6–Cys30, and Cys20–Cys38.

This sequence belongs to the sea anemone type 3 (BDS) potassium channel toxin family.

The protein resides in the secreted. It is found in the nematocyst. Functionally, toxin with different activities on acid-sensing ion channels (ASIC) and nicotinic acetylcholine receptors. Is able to bind T.californica muscle-type nicotinic acetylcholine receptors (nAChR) (alpha-1-beta-1-delta-epsilon (CHRNA1-CHRNB1-CHRND-CHRNE)), and human alpha-7/CHRNA7 nicotinic acetylcholine receptors. Weakly and reversibly inhibits rat homomeric ASIC1 (isoform ASIC1a) (IC(50)=1.25 uM), while it potentiates rat homomeric ASIC3 (EC(50)=1.53 uM). Rat ASIC1a current inhibition is not complete, and reaches a maximum of 86% inhibition. On rat ASIC3, does not activate the channel itself, but produces a remarkable potentiation of the transient current resulting from the acidic pulse. At the maximal applied concentration, elicits responses that are twice as high as those produced by extracellular protons. Surprisingly, shows a different activity on human ASIC3. On the truncated human ASIC3 (ASIC3-D20), the toxin weakly inhibits the channel. Molecular modeling interaction with rat ASIC1a suggests that it hinders the collapse of acidic pockets and stabilizes nonconducting channels state. In vivo, causes an anxiolytic effect on mouse behavior. Also shows an analgesic activity in an acid-induced muscle pain model, and important anti-inflammatory effect in models of acute local inflammation. The protein is Pi-stichotoxin-Hmg5c of Heteractis magnifica (Magnificent sea anemone).